The chain runs to 349 residues: Isopentenyl-diphosphate delta-isomerase (349 aa).

6–7 (RK) contributes to the substrate binding site. Residues 62-64 (AMT), S93, and N122 contribute to the FMN site. Position 152 (Q152) interacts with substrate. Position 153 (E153) interacts with Mg(2+). Residues K184, T214, 258–259 (GG), and 280–281 (AG) contribute to the FMN site.

This sequence belongs to the IPP isomerase type 2 family. As to quaternary structure, homooctamer. Dimer of tetramers. Requires FMN as cofactor. NADPH is required as a cofactor. Mg(2+) serves as cofactor.

Its subcellular location is the cytoplasm. It catalyses the reaction isopentenyl diphosphate = dimethylallyl diphosphate. Functionally, involved in the biosynthesis of isoprenoids. Catalyzes the 1,3-allylic rearrangement of the homoallylic substrate isopentenyl (IPP) to its allylic isomer, dimethylallyl diphosphate (DMAPP). This Bacillus cereus (strain 03BB102) protein is Isopentenyl-diphosphate delta-isomerase.